The sequence spans 147 residues: Large ribosomal subunit protein uL13 (147 aa).

The protein belongs to the universal ribosomal protein uL13 family. In terms of assembly, part of the 50S ribosomal subunit.

This protein is one of the early assembly proteins of the 50S ribosomal subunit, although it is not seen to bind rRNA by itself. It is important during the early stages of 50S assembly. The chain is Large ribosomal subunit protein uL13 from Arthrobacter sp. (strain FB24).